The sequence spans 265 residues: Ribosomal RNA small subunit methyltransferase A (265 aa).

S-adenosyl-L-methionine is bound by residues H11, L13, G38, E59, D83, and N100.

The protein belongs to the class I-like SAM-binding methyltransferase superfamily. rRNA adenine N(6)-methyltransferase family. RsmA subfamily.

The protein resides in the cytoplasm. The catalysed reaction is adenosine(1518)/adenosine(1519) in 16S rRNA + 4 S-adenosyl-L-methionine = N(6)-dimethyladenosine(1518)/N(6)-dimethyladenosine(1519) in 16S rRNA + 4 S-adenosyl-L-homocysteine + 4 H(+). Specifically dimethylates two adjacent adenosines (A1518 and A1519) in the loop of a conserved hairpin near the 3'-end of 16S rRNA in the 30S particle. May play a critical role in biogenesis of 30S subunits. In Thermosynechococcus vestitus (strain NIES-2133 / IAM M-273 / BP-1), this protein is Ribosomal RNA small subunit methyltransferase A.